A 331-amino-acid chain; its full sequence is MTQSPTPAVVTVTGAAGSIGYAALFRIAAGAMLGPDTPIRLRLLEIPPAVSAAEGTAMELDDSAFPLLLDVEVHDDPKRGFDGTDVALLIGSRPRSKGMERGDLLAANGQIFTVQGRAINQVAADGVRVLVVGNPANTNALVAANNAPDVPAERFTALTRLDHNRAIAQLARHSGAAVRDISRVTIWGNHSSTQYPDIFHARVGDRSGADIAADREWLTGDFIPTVANRGSAIIEARGTSSAASAANAAIDHVHDWVLGTPEGDWTSVALPSTGAYGVPEGLVSSFPVRSVDGAWQVVEGLEIDDFSRKRIDASVADLESERDAVRGMGFI.

14–20 (GAAGSIG) provides a ligand contact to NAD(+). Residues arginine 95 and arginine 101 each contribute to the substrate site. NAD(+)-binding positions include asparagine 108, glutamine 115, and 132-134 (VGN). Residues asparagine 134 and arginine 165 each contribute to the substrate site. The Proton acceptor role is filled by histidine 190.

Belongs to the LDH/MDH superfamily. MDH type 2 family.

The catalysed reaction is (S)-malate + NAD(+) = oxaloacetate + NADH + H(+). Catalyzes the reversible oxidation of malate to oxaloacetate. This is Malate dehydrogenase from Rhodococcus opacus (strain B4).